Consider the following 338-residue polypeptide: E3 ubiquitin-protein ligase SPL1 (338 aa).

Residues 1 to 21 traverse the membrane as a helical segment; that stretch reads MIHLAGFTCCLGGVALYLLTR. Residues 22–223 lie on the Chloroplast intermembrane side of the membrane; the sequence is STGRDIKSIT…KLGDLSRRFK (202 aa). Residues 224-246 traverse the membrane as a helical segment; sequence YASMGLTVLGVILISKPVIEYIL. The Cytoplasmic segment spans residues 247-338; that stretch reads KRIEDTLERR…IQQVLKIYRH (92 aa). The RING-type zinc-finger motif lies at 291–326; it reads CVVCLDQKYNTAFVECGHMCCCTPCSLQLRTCPLCR.

The protein localises to the plastid. It localises to the chloroplast outer membrane. It carries out the reaction S-ubiquitinyl-[E2 ubiquitin-conjugating enzyme]-L-cysteine + [acceptor protein]-L-lysine = [E2 ubiquitin-conjugating enzyme]-L-cysteine + N(6)-ubiquitinyl-[acceptor protein]-L-lysine.. The protein operates within protein modification; protein ubiquitination. Possesses E3 ubiquitin-protein ligase activity. In Arabidopsis thaliana (Mouse-ear cress), this protein is E3 ubiquitin-protein ligase SPL1.